Consider the following 140-residue polypeptide: Nucleoside diphosphate kinase (140 aa).

The ATP site is built by Lys-11, Phe-59, Arg-87, Thr-93, Arg-104, and Asn-114. His-117 serves as the catalytic Pros-phosphohistidine intermediate.

It belongs to the NDK family. In terms of assembly, homotetramer. Requires Mg(2+) as cofactor.

It localises to the cytoplasm. It carries out the reaction a 2'-deoxyribonucleoside 5'-diphosphate + ATP = a 2'-deoxyribonucleoside 5'-triphosphate + ADP. The catalysed reaction is a ribonucleoside 5'-diphosphate + ATP = a ribonucleoside 5'-triphosphate + ADP. Functionally, major role in the synthesis of nucleoside triphosphates other than ATP. The ATP gamma phosphate is transferred to the NDP beta phosphate via a ping-pong mechanism, using a phosphorylated active-site intermediate. The polypeptide is Nucleoside diphosphate kinase (Rhizobium johnstonii (strain DSM 114642 / LMG 32736 / 3841) (Rhizobium leguminosarum bv. viciae)).